A 165-amino-acid chain; its full sequence is MMNQLTHINASGEANMVDVSAKAETVREARAEAFVHMAPETLELIVSGQNHKGDVFATARIAGIQAAKKTWDLIPLCHPLLLSKVEVQLEAIPAANENETNMVRIESCCKLAGKTGVEMEALTAASVAALTIYDMCKAVQKDMVISQVRLLEKTGGKSGHFKVEA.

Residues 76–78 (LCH) and 119–120 (ME) contribute to the substrate site. The active site involves aspartate 134.

This sequence belongs to the MoaC family. As to quaternary structure, homohexamer; trimer of dimers.

It carries out the reaction (8S)-3',8-cyclo-7,8-dihydroguanosine 5'-triphosphate = cyclic pyranopterin phosphate + diphosphate. It functions in the pathway cofactor biosynthesis; molybdopterin biosynthesis. In terms of biological role, catalyzes the conversion of (8S)-3',8-cyclo-7,8-dihydroguanosine 5'-triphosphate to cyclic pyranopterin monophosphate (cPMP). The polypeptide is Cyclic pyranopterin monophosphate synthase (Photobacterium profundum (strain SS9)).